Here is a 469-residue protein sequence, read N- to C-terminus: Calcium/calmodulin-dependent protein kinase type IV (469 aa).

2 positions are modified to phosphoserine; by autocatalysis: Ser11 and Ser12. The 255-residue stretch at 42–296 folds into the Protein kinase domain; the sequence is FEVESELGRG…TFQALQHPWV (255 aa). Residues 48–56 and Lys71 each bind ATP; that span reads LGRGATSIV. Thr53 carries an O-linked (GlcNAc) threonine glycan. Ser54 is a glycosylation site (O-linked (GlcNAc) serine). Ser133 is a glycosylation site (O-linked (GlcNAc) serine). The Proton acceptor role is filled by Asp160. The O-linked (GlcNAc) serine glycan is linked to Ser185. Position 196 is a phosphothreonine (Thr196). Residues 297–336 form an autoinhibitory domain region; that stretch reads TGKAANFVHMDTAQKKLQEFNARRKLKAAVKAVVASSRLG. The PP2A-binding stretch occupies residues 302–319; that stretch reads NFVHMDTAQKKLQEFNAR. The calmodulin-binding stretch occupies residues 318-337; it reads ARRKLKAAVKAVVASSRLGS. Residue Ser332 is modified to Phosphoserine; by autocatalysis. The interval 336 to 469 is disordered; the sequence is GSASSSHTSI…PQQDAIQPEY (134 aa). Ser337 bears the Phosphoserine mark. O-linked (GlcNAc) serine glycans are attached at residues Ser340, Ser341, and Ser352. Positions 360–374 are enriched in basic and acidic residues; sequence DAKDSTDLLGKKMQE. The segment covering 375-388 has biased composition (acidic residues); it reads EDQEEDQVEAEASA. Basic and acidic residues predominate over residues 389 to 409; the sequence is DEMRKLQSEEVEKDAGVKEEE. Residues 417 to 426 are compositionally biased toward acidic residues; it reads DPEDELETDD. The span at 427 to 441 shows a compositional bias: basic and acidic residues; sequence PEMKRDSEEKLKSVE. 2 positions are modified to phosphoserine: Ser433 and Ser439. The span at 442–453 shows a compositional bias: acidic residues; the sequence is EEMDPMTEEEAP.

The protein belongs to the protein kinase superfamily. CAMK Ser/Thr protein kinase family. CaMK subfamily. Monomer. Interacts with protein phosphatase 2A (PPP2CA/PPP2CB); the interaction is mutually exclusive with binding to Ca(2+)/calmodulin. In terms of processing, phosphorylated by CaMKK1 and CaMKK2 on Thr-196. Dephosphorylated by protein phosphatase 2A. Autophosphorylated on Ser-11 and Ser-12. Post-translationally, glycosylation at Ser-185 modulates the phosphorylation of CaMK4 at Thr-196 and negatively regulates its activity toward CREB1 in basal conditions and during early inomycin stimulation. Expressed in brain and testis.

It is found in the cytoplasm. It localises to the nucleus. It catalyses the reaction L-seryl-[protein] + ATP = O-phospho-L-seryl-[protein] + ADP + H(+). The catalysed reaction is L-threonyl-[protein] + ATP = O-phospho-L-threonyl-[protein] + ADP + H(+). Activated by Ca(2+)/calmodulin. Binding of calmodulin results in conformational change that relieves intrasteric autoinhibition and allows phosphorylation of Thr-196 within the activation loop by CaMKK1 or CaMKK2. Phosphorylation of Thr-196 results in a 10-20-fold increase in total activity to generate Ca(2+)/calmodulin-independent activity. Autophosphorylation of the N-terminus Ser-11 and Ser-12 is required for full activation. Inactivated by protein phosphatase 2A (PPP2CA/PPP2CB) which dephosphorylates Thr-196, thereby terminating autonomous activity and helping to maintain the enzyme in its autoinhibited state. Its function is as follows. Calcium/calmodulin-dependent protein kinase that operates in the calcium-triggered CaMKK-CaMK4 signaling cascade and regulates, mainly by phosphorylation, the activity of several transcription activators, such as CREB1, MEF2D, JUN and RORA, which play pivotal roles in immune response, inflammation, and memory consolidation. In the thymus, regulates the CD4(+)/CD8(+) double positive thymocytes selection threshold during T-cell ontogeny. In CD4 memory T-cells, is required to link T-cell antigen receptor (TCR) signaling to the production of IL2, IFNG and IL4 (through the regulation of CREB and MEF2). Regulates the differentiation and survival phases of osteoclasts and dendritic cells (DCs). Mediates DCs survival by linking TLR4 and the regulation of temporal expression of BCL2. Phosphorylates the transcription activator CREB1 on 'Ser-133' in hippocampal neuron nuclei and contribute to memory consolidation and long term potentiation (LTP) in the hippocampus. Can activate the MAP kinases MAPK1/ERK2, MAPK8/JNK1 and MAPK14/p38 and stimulate transcription through the phosphorylation of ELK1 and ATF2. Can also phosphorylate in vitro CREBBP, PRM2, MEF2A and STMN1/OP18. May be involved in spermatogenesis. In Mus musculus (Mouse), this protein is Calcium/calmodulin-dependent protein kinase type IV (Camk4).